Consider the following 400-residue polypeptide: DNA polymerase IV (400 aa).

Residues 8–191 (ILLCDANSFF…LPVRELFGIG (184 aa)) form the UmuC domain. Mg(2+) contacts are provided by D12 and D109. Residue E110 is part of the active site.

The protein belongs to the DNA polymerase type-Y family. As to quaternary structure, monomer. Requires Mg(2+) as cofactor.

The protein localises to the cytoplasm. It catalyses the reaction DNA(n) + a 2'-deoxyribonucleoside 5'-triphosphate = DNA(n+1) + diphosphate. Its function is as follows. Poorly processive, error-prone DNA polymerase involved in untargeted mutagenesis. Copies undamaged DNA at stalled replication forks, which arise in vivo from mismatched or misaligned primer ends. These misaligned primers can be extended by PolIV. Exhibits no 3'-5' exonuclease (proofreading) activity. May be involved in translesional synthesis, in conjunction with the beta clamp from PolIII. The sequence is that of DNA polymerase IV from Moorella thermoacetica (strain ATCC 39073 / JCM 9320).